The sequence spans 258 residues: ATP synthase subunit a (258 aa).

5 helical membrane passes run 38-58 (KPVW…YVGA), 94-114 (WFPY…IGLF), 118-138 (YPVT…FVLT), 193-213 (ILAG…FGLP), and 215-235 (AFVS…VAVI).

It belongs to the ATPase A chain family. In terms of assembly, F-type ATPases have 2 components, CF(1) - the catalytic core - and CF(0) - the membrane proton channel. CF(1) has five subunits: alpha(3), beta(3), gamma(1), delta(1), epsilon(1). CF(0) has three main subunits: a(1), b(2) and c(9-12). The alpha and beta chains form an alternating ring which encloses part of the gamma chain. CF(1) is attached to CF(0) by a central stalk formed by the gamma and epsilon chains, while a peripheral stalk is formed by the delta and b chains.

It localises to the cell membrane. Its function is as follows. Key component of the proton channel; it plays a direct role in the translocation of protons across the membrane. The polypeptide is ATP synthase subunit a (Rubrobacter xylanophilus (strain DSM 9941 / JCM 11954 / NBRC 16129 / PRD-1)).